The primary structure comprises 552 residues: Non-structural protein NS1 (552 aa).

This sequence belongs to the orbivirus non-structural protein NS1 family.

This Bluetongue virus 10 (isolate USA) (BTV 10) protein is Non-structural protein NS1 (Segment-5).